The sequence spans 925 residues: Serine/threonine-protein kinase PLK4 (925 aa).

Residues 12–265 form the Protein kinase domain; sequence FKVGNLLGKG…LSSVLDHPFM (254 aa). ATP-binding positions include 18–26 and K41; that span reads LGKGSFAGV. An N6-acetyllysine mark is found at K45 and K46. Residue D136 is the Proton acceptor of the active site. Disordered regions lie at residues 262–283 and 328–394; these read HPFM…EDSM and KNSS…KTYS. Over residues 330–341 the composition is skewed to low complexity; that stretch reads SSDFSSGDGSNF. The span at 342 to 353 shows a compositional bias: polar residues; sequence CTQWGNPEQEAN. Over residues 359–369 the composition is skewed to basic and acidic residues; that stretch reads RVIEDAEERPH. Residues 381-391 show a composition bias toward polar residues; sequence RASPSNQSRAK. S400 carries the post-translational modification Phosphoserine. The interval 517-538 is disordered; sequence EVMPQEPGLHPHSEQSKNRSME. The span at 525 to 536 shows a compositional bias: basic and acidic residues; that stretch reads LHPHSEQSKNRS. The 114-residue stretch at 547 to 660 folds into the Cryptic POLO box 1 (CPB1) domain; it reads TLRSITSPLI…SRFIQLVRSK (114 aa). The Cryptic POLO box 2 (CPB2) domain maps to 661-774; it reads TPKITYFTRY…GRKPGNTSSP (114 aa). Phosphoserine is present on S778. The POLO box domain maps to 841–919; that stretch reads QLLKSVFVKN…LSSILLMFSN (79 aa).

This sequence belongs to the protein kinase superfamily. Ser/Thr protein kinase family. CDC5/Polo subfamily. As to quaternary structure, homodimer. Interacts with CEP152 (via N-terminus). Interacts with CEP78; this interaction may be important for proper PLK4 localization to the centriole and PLK4-induced overduplication of centrioles. Interacts with CEP131. Interacts simultaneously with TENT5C and CEP192. Interacts with TENT5C; this interaction leads to the TENT5C recruitment in the centrosome. Interacts with CEP85; this interaction may be important in cell migration and centriole assembly. In terms of processing, ubiquitinated; leading to its degradation by the proteasome. Deubiquitinated by USP54; leading to PLK4 stabilization. Post-translationally, tyrosine-phosphorylated by TEC. Acetylation by KAT2A and KAT2B impairs kinase activity by shifting the kinase to an inactive conformation. As to expression, expressed in tissues associated with mitotic and meiotic cell division. Highly expressed in testis.

It is found in the cytoplasm. The protein localises to the cytoskeleton. The protein resides in the microtubule organizing center. It localises to the centrosome. Its subcellular location is the centriole. It is found in the nucleus. The protein localises to the nucleolus. The protein resides in the cleavage furrow. The catalysed reaction is L-seryl-[protein] + ATP = O-phospho-L-seryl-[protein] + ADP + H(+). The enzyme catalyses L-threonyl-[protein] + ATP = O-phospho-L-threonyl-[protein] + ADP + H(+). Serine/threonine-protein kinase that plays a central role in centriole duplication. Able to trigger procentriole formation on the surface of the parental centriole cylinder, leading to the recruitment of centriole biogenesis proteins such as SASS6, CPAP, CCP110, CEP135 and gamma-tubulin. When overexpressed, it is able to induce centrosome amplification through the simultaneous generation of multiple procentrioles adjoining each parental centriole during S phase. Phosphorylates 'Ser-151' of FBXW5 during the G1/S transition, leading to inhibit FBXW5 ability to ubiquitinate SASS6. Its central role in centriole replication suggests a possible role in tumorigenesis, centrosome aberrations being frequently observed in tumors. Phosphorylates CDC25C and CHEK2. Also involved in deuterosome-mediated centriole amplification in multiciliated that can generate more than 100 centrioles. Also involved in trophoblast differentiation by phosphorylating HAND1, leading to disrupt the interaction between HAND1 and MDFIC and activate HAND1. Required for the recruitment of STIL to the centriole and for STIL-mediated centriole amplification. Phosphorylates CEP131 at 'Ser-78' and PCM1 at 'Ser-372' which is essential for proper organization and integrity of centriolar satellites. The chain is Serine/threonine-protein kinase PLK4 from Mus musculus (Mouse).